Reading from the N-terminus, the 260-residue chain is Spectinomycin 9-adenylyltransferase (260 aa).

It catalyses the reaction spectinomycin + ATP = 9-O-adenylylspectinomycin + diphosphate. Functionally, mediates bacterial resistance to the antibiotic spectinomycin but not streptomycin. The chain is Spectinomycin 9-adenylyltransferase (ant1) from Staphylococcus aureus (strain Mu50 / ATCC 700699).